The chain runs to 151 residues: uncharacterized protein (151 aa).

The tract at residues 122–151 (GVAQRQVPTTGTHSFFHCTSEGNKEKPHHF) is disordered.

This is an uncharacterized protein from Homo sapiens (Human).